The primary structure comprises 738 residues: Alcohol dehydrogenase (quinone), dehydrogenase subunit (738 aa).

The signal sequence occupies residues 1 to 35; that stretch reads MISAVFGKRRSLSRTLTAGTICAALISGYATMASA. Glu97 is a pyrroloquinoline quinone binding site. A disulfide bridge links Cys143 with Cys144. Residue Arg149 coordinates pyrroloquinoline quinone. Glu217 lines the Ca(2+) pocket. Thr278 provides a ligand contact to pyrroloquinoline quinone. Ca(2+)-binding residues include Asn298 and Asp343. Asp343 acts as the Proton acceptor in catalysis. Lys370 and Ile584 together coordinate pyrroloquinoline quinone. Residues 634–738 form the Cytochrome c domain; that stretch reads FDSKRTDNGY…NADGIPEQLP (105 aa). Heme c is bound by residues Cys650, Cys653, His654, and Met693.

It belongs to the bacterial PQQ dehydrogenase family. As to quaternary structure, the alcohol dehydrogenase multicomponent enzyme system is composed of a dehydrogenase subunit I (AdhA) and a cytochrome c subunit II (AdhB). It depends on pyrroloquinoline quinone as a cofactor. Requires Ca(2+) as cofactor. Heme c is required as a cofactor.

The protein localises to the cell membrane. The enzyme catalyses ethanol + a ubiquinone = a ubiquinol + acetaldehyde. In terms of biological role, dehydrogenase component of the alcohol dehydrogenase multicomponent enzyme system which is involved in the production of acetic acid and in the ethanol oxidase respiratory chain. Quinohemoprotein alcohol dehydrogenase (ADH) catalyzes the oxidation of ethanol to acetaldehyde by transferring electrons to the ubiquinone embedded in the membrane phospholipids. The electrons transfer from ethanol to membranous ubiquinone occurs from pyrroloquinoline quinone (PQQ) to one heme c in subunit I (AdhA), and finally to two heme c in subunit II (AdhB). Besides ubiquinone reduction, ADH also has a ubiquinol (QH2) oxidation reaction which mediates electron transfer from ubiquinol to the non-energy generating bypass oxidase system. The electrons transfer occurs from ubiquinol (QH2) to the additional heme c within subunit II (AdhB). This Gluconacetobacter polyoxogenes (Acetobacter polyoxogenes) protein is Alcohol dehydrogenase (quinone), dehydrogenase subunit (adhA).